A 199-amino-acid polypeptide reads, in one-letter code: Thymidine kinase (199 aa).

ATP contacts are provided by residues Gly23–Thr30 and Asp95–Gln98. The active-site Proton acceptor is the Glu96. 4 residues coordinate Zn(2+): Cys152, Cys155, Cys184, and Cys187.

The protein belongs to the thymidine kinase family. Homotetramer.

The protein localises to the cytoplasm. It catalyses the reaction thymidine + ATP = dTMP + ADP + H(+). The polypeptide is Thymidine kinase (Bacteroides thetaiotaomicron (strain ATCC 29148 / DSM 2079 / JCM 5827 / CCUG 10774 / NCTC 10582 / VPI-5482 / E50)).